Reading from the N-terminus, the 238-residue chain is MPGLPYPRILVKVSGEALMGSEPFGLHPPTVARIARELVAARELGCEVAVVVGGGNILRGARVAGEDLDRSTADHMGMLATVMNCLALEAAVEAAGQPARTMSAIPMPTVCEPYARQPAQRHLRRGRVVLLAGGTGNPYFTTDTGAVLRAAELDCDAVLKATNVDGVYTADPKTDPTATRYERITHDQALAYDLKVMDAAAFALAREASLPIIVFSIRDPGAIVAAAQGEGRVTVVSP.

12 to 15 (KVSG) serves as a coordination point for ATP. Gly-54 contributes to the UMP binding site. Gly-55 and Arg-59 together coordinate ATP. Residues Asp-74 and 135–142 (TGNPYFTT) each bind UMP. Residues Thr-162, Asn-163, Tyr-168, and Asp-171 each contribute to the ATP site.

Belongs to the UMP kinase family. Homohexamer.

Its subcellular location is the cytoplasm. It catalyses the reaction UMP + ATP = UDP + ADP. It participates in pyrimidine metabolism; CTP biosynthesis via de novo pathway; UDP from UMP (UMPK route): step 1/1. Inhibited by UTP. In terms of biological role, catalyzes the reversible phosphorylation of UMP to UDP. In Azorhizobium caulinodans (strain ATCC 43989 / DSM 5975 / JCM 20966 / LMG 6465 / NBRC 14845 / NCIMB 13405 / ORS 571), this protein is Uridylate kinase.